Here is a 104-residue protein sequence, read N- to C-terminus: uncharacterized protein (104 aa).

The protein localises to the mitochondrion. This is an uncharacterized protein from Claviceps purpurea (Ergot fungus).